Reading from the N-terminus, the 1380-residue chain is DNA-directed RNA polymerase subunit beta (1380 aa).

This sequence belongs to the RNA polymerase beta chain family. In terms of assembly, the RNAP catalytic core consists of 2 alpha, 1 beta, 1 beta' and 1 omega subunit. When a sigma factor is associated with the core the holoenzyme is formed, which can initiate transcription.

The enzyme catalyses RNA(n) + a ribonucleoside 5'-triphosphate = RNA(n+1) + diphosphate. Its function is as follows. DNA-dependent RNA polymerase catalyzes the transcription of DNA into RNA using the four ribonucleoside triphosphates as substrates. The sequence is that of DNA-directed RNA polymerase subunit beta from Nitrobacter winogradskyi (strain ATCC 25391 / DSM 10237 / CIP 104748 / NCIMB 11846 / Nb-255).